The sequence spans 358 residues: Probable dual-specificity RNA methyltransferase RlmN 1 (358 aa).

The 226-residue stretch at 101-326 folds into the Radical SAM core domain; that stretch reads MQAGGTLCIS…REKGFYTLLR (226 aa). A disulfide bond links Cys108 and Cys337. Residues Cys115, Cys119, and Cys122 each contribute to the [4Fe-4S] cluster site. S-adenosyl-L-methionine is bound by residues 162-163, Ser194, 218-220, and Asn294; these read GE and SLN. The active-site S-methylcysteine intermediate is Cys337.

It belongs to the radical SAM superfamily. RlmN family. Requires [4Fe-4S] cluster as cofactor.

The protein resides in the cytoplasm. It catalyses the reaction adenosine(2503) in 23S rRNA + 2 reduced [2Fe-2S]-[ferredoxin] + 2 S-adenosyl-L-methionine = 2-methyladenosine(2503) in 23S rRNA + 5'-deoxyadenosine + L-methionine + 2 oxidized [2Fe-2S]-[ferredoxin] + S-adenosyl-L-homocysteine. It carries out the reaction adenosine(37) in tRNA + 2 reduced [2Fe-2S]-[ferredoxin] + 2 S-adenosyl-L-methionine = 2-methyladenosine(37) in tRNA + 5'-deoxyadenosine + L-methionine + 2 oxidized [2Fe-2S]-[ferredoxin] + S-adenosyl-L-homocysteine. Its function is as follows. Specifically methylates position 2 of adenine 2503 in 23S rRNA and position 2 of adenine 37 in tRNAs. This is Probable dual-specificity RNA methyltransferase RlmN 1 from Protochlamydia amoebophila (strain UWE25).